The sequence spans 152 residues: UPF0266 membrane protein ESA_01432 (152 aa).

3 helical membrane passes run 1-21, 45-65, and 67-87; these read MTLTDGVLVIFIIALLGWAIY, ADSLIFTGLVAILIWQNVASH, and ALLTTWLLGALGLLAIYLFWI.

The protein belongs to the UPF0266 family.

It is found in the cell inner membrane. The sequence is that of UPF0266 membrane protein ESA_01432 from Cronobacter sakazakii (strain ATCC BAA-894) (Enterobacter sakazakii).